A 605-amino-acid chain; its full sequence is Beta-conglycinin alpha subunit 1 (605 aa).

An N-terminal signal peptide occupies residues 1–22 (MMRARFPLLLLGLVFLASVSVS). Residues 23–62 (FGIAYWEKENPKHNKCLQSCNSERDSYRNQACHARCNLLK) constitute a propeptide that is removed on maturation. The tract at residues 65–195 (KEECEEGEIP…ELRRHKNKNP (131 aa)) is disordered. Residues 111–136 (PRQEEEHEQREEQEWPRKEEKRGEKG) are compositionally biased toward basic and acidic residues. 2 stretches are compositionally biased toward acidic residues: residues 137 to 149 (SEEEDEDEDEEQD) and 169 to 184 (EDEDEEQQRESEESED). 2 Cupin type-1 domains span residues 196 to 354 (FLFG…EEIN) and 406 to 567 (FNLR…QAVE). N-linked (GlcNAc...) asparagine glycosylation is found at N261 and N517.

Belongs to the 7S seed storage protein family. The alpha-, alpha'-, and beta-subunits associate in various combinations to form trimeric proteins.

The protein resides in the vacuole. It localises to the aleurone grain. Its subcellular location is the endoplasmic reticulum. The protein localises to the protein storage vacuole. Seed storage protein. Accumulates during seed development and is hydrolyzed after germination to provide a carbon and nitrogen source for the developing seedling. This Glycine max (Soybean) protein is Beta-conglycinin alpha subunit 1.